The following is a 657-amino-acid chain: Zinc finger CCCH domain-containing protein 50 (657 aa).

2 ANK repeats span residues 68–97 (EART…CVDV) and 104–136 (DGAT…DPAT). A compositionally biased stretch (low complexity) spans 176 to 206 (SVASGSSSPPLSSSPDEGNRSPSSRSSSLSP). Residues 176–222 (SVASGSSSPPLSSSPDEGNRSPSSRSSSLSPITVDRGKKEYPVDPTL) form a disordered region. 2 C3H1-type zinc fingers span residues 274 to 302 (PYTA…HGVF) and 311 to 333 (YRTR…AHDE). A disordered region spans residues 507 to 566 (YSPRALDPSSLAHSPFGGMSPRSPRTMEPTSPLSARVGAPATQRPSVGSPRNSSAWGTVG). Over residues 549–562 (QRPSVGSPRNSSAW) the composition is skewed to polar residues.

The chain is Zinc finger CCCH domain-containing protein 50 from Oryza sativa subsp. japonica (Rice).